A 151-amino-acid chain; its full sequence is Acidic phospholipase A2 1 (151 aa).

The signal sequence occupies residues Met-1 to Leu-27. 7 cysteine pairs are disulfide-bonded: Cys-38–Cys-104, Cys-54–Cys-151, Cys-56–Cys-72, Cys-71–Cys-132, Cys-78–Cys-125, Cys-88–Cys-118, and Cys-111–Cys-123. Residues Tyr-55, Gly-57, and Gly-59 each coordinate Ca(2+). The active site involves His-75. Ca(2+) is bound at residue Asp-76. The active site involves Asp-126.

It belongs to the phospholipase A2 family. Group I subfamily. D49 sub-subfamily. Ca(2+) is required as a cofactor. Expressed by the venom gland.

Its subcellular location is the secreted. It catalyses the reaction a 1,2-diacyl-sn-glycero-3-phosphocholine + H2O = a 1-acyl-sn-glycero-3-phosphocholine + a fatty acid + H(+). In terms of biological role, PLA2 catalyzes the calcium-dependent hydrolysis of the 2-acyl groups in 3-sn-phosphoglycerides. This Tropidechis carinatus (Australian rough-scaled snake) protein is Acidic phospholipase A2 1.